The chain runs to 258 residues: Methylthioribulose-1-phosphate dehydratase (258 aa).

The segment covering 1–20 (MTPPSNGQAAETNDHLVQSD) has biased composition (polar residues). The interval 1–21 (MTPPSNGQAAETNDHLVQSDN) is disordered. C105 contacts substrate. Residues H123 and H125 each coordinate Zn(2+). The active-site Proton donor/acceptor is E153. H210 serves as a coordination point for Zn(2+).

Belongs to the aldolase class II family. MtnB subfamily. Requires Zn(2+) as cofactor.

The protein resides in the cytoplasm. It carries out the reaction 5-(methylsulfanyl)-D-ribulose 1-phosphate = 5-methylsulfanyl-2,3-dioxopentyl phosphate + H2O. Its pathway is amino-acid biosynthesis; L-methionine biosynthesis via salvage pathway; L-methionine from S-methyl-5-thio-alpha-D-ribose 1-phosphate: step 2/6. Functionally, catalyzes the dehydration of methylthioribulose-1-phosphate (MTRu-1-P) into 2,3-diketo-5-methylthiopentyl-1-phosphate (DK-MTP-1-P). This chain is Methylthioribulose-1-phosphate dehydratase, found in Chaetomium globosum (strain ATCC 6205 / CBS 148.51 / DSM 1962 / NBRC 6347 / NRRL 1970) (Soil fungus).